A 3176-amino-acid chain; its full sequence is Large tegument protein deneddylase (3176 aa).

A compositionally biased stretch (polar residues) spans 1 to 12 (MSNGDWGQSQRP). The tract at residues 1-28 (MSNGDWGQSQRPRGTGPMRGIRTMDVNA) is disordered. A deubiquitination activity region spans residues 1–268 (MSNGDWGQSQ…YEANGSGFDL (268 aa)). Residues 41-258 (LGTASCNQAH…MLEHYGVYDF (218 aa)) form the Peptidase C76 domain. Active-site residues include C61, D193, and H195. A disordered region spans residues 319–342 (PAARYSPAKTNSPPPSPASAAPAS). A run of 5 repeats spans residues 335-339 (PASAA), 340-344 (PASAA), 345-349 (PASAA), 350-354 (PASAA), and 355-359 (PASAA). Residues 335-384 (PASAAPASAAPASAAPASAAPASAAQASVAPASVAPASAAPASAAPDSAA) are 10 X 5 AA approximate repeats of P-A-S-A-A. The 6; approximate repeat unit spans residues 360 to 364 (QASVA). The 7; approximate repeat unit spans residues 365-369 (PASVA). 2 repeat units span residues 370-374 (PASAA) and 375-379 (PASAA). Low complexity predominate over residues 376–386 (ASAAPDSAAPA). 6 disordered regions span residues 376–683 (ASAA…GSGL), 928–950 (LLSGGDQEGEEGGGEPEDHSIYR), 1170–1193 (APISPASPSATPANHDNPEATPPL), 1435–1461 (LMETGRKEKEKLREQEDKERRERRARE), 2610–3008 (GLVS…PGAR), and 3023–3043 (TYTVQKEAPPSAASQLPKMPK). Residues 380-384 (PDSAA) form a 10; approximate repeat. Residues 457 to 488 (PRPPVPPHRPPSAARLPPPVIPIPHQSPPASP) show a composition bias toward pro residues. Positions 519 to 546 (AAPSNPEIPLTTPSPSPTAAAAPTATTL) are enriched in low complexity. Positions 579–636 (APSPLLPQQQPPPSAAPAPSPLLPQQQPPPSAARAPSPLPPQQQPLPSATPAPPPAQQ) are enriched in pro residues. The tract at residues 581–611 (SPLLPQQQPPPSAAPAPSPLLPQQQPPPSAA) is interaction with inner tegument protein. Over residues 1170 to 1182 (APISPASPSATPA) the composition is skewed to low complexity. Residues 2619–2630 (SADNTPASSDRL) are compositionally biased toward polar residues. Residues 2643 to 2654 (EGSTTAESEASG) show a composition bias toward low complexity. A compositionally biased stretch (pro residues) spans 2738–2747 (QPAPQQPPSS). 2 stretches are compositionally biased toward polar residues: residues 2761-2772 (SPHSTPSTASGS) and 2811-2831 (SAASLTTFGLQPQDTQASSQD). A compositionally biased stretch (basic and acidic residues) spans 2839–2854 (MQREKKQQGGREEAAE). Low complexity-rich tracts occupy residues 2872 to 2886 (APVVAAGAAASATPA) and 2901 to 2912 (APALGSGLAAPA).

Belongs to the herpesviridae large tegument protein family. In terms of assembly, interacts with host CUL1 and CUL4A; these interactions inhibit the E3 ligase activity of cullins. Interacts with inner tegument protein. Interacts with capsid vertex specific component CVC2. Interacts with the major capsid protein/MCP. Interacts with host TRIM25 and YWHAZ.

The protein localises to the virion tegument. The protein resides in the host cytoplasm. Its subcellular location is the host nucleus. It catalyses the reaction Thiol-dependent hydrolysis of ester, thioester, amide, peptide and isopeptide bonds formed by the C-terminal Gly of ubiquitin (a 76-residue protein attached to proteins as an intracellular targeting signal).. Its function is as follows. Large tegument protein that plays multiple roles in the viral cycle. During viral entry, remains associated with the capsid while most of the tegument is detached and participates in the capsid transport toward the host nucleus. Plays a role in the routing of the capsid at the nuclear pore complex and subsequent uncoating. Within the host nucleus, acts as a deneddylase and promotes the degradation of nuclear CRLs (cullin-RING ubiquitin ligases) and thereby stabilizes nuclear CRL substrates, while cytoplasmic CRLs remain unaffected. These modifications prevent host cell cycle S-phase progression and create a favorable environment allowing efficient viral genome replication. Participates later in the secondary envelopment of capsids. Indeed, plays a linker role for the association of the outer viral tegument to the capsids together with the inner tegument protein. Counteracts host TLR-mediated NF-kappa-B activation through both MYD88 and TICAM1-dependent pathways by interfering with 'Lys-63'- and 'Lys-48'-linked ubiquitination of signaling intermediates such as TRAF6 and IKBKG. Inhibits type I interferon production by forming a tri-molecular complex with host TRIM25 and 14-3-3 thereby promoting TRIM25 autoubiquitination and sequestration of the ligase into inactive protein aggregates. In turn, host RIGI is recruited to the complex but ubiquitination is severely impaired leading to inhibition of the pathway. Also catalyzes the removal of 'Lys-48'- and 'Lys-63'-linked ubiquitin chains on host TBK1 and STING1 suppressing cGAS-STING signaling in addition to the RIGI-MAVS pathway. Inhibits selective autophagy by deubiquitinating host SQSTM1. In turn, decreased SQSTM1 ubiquitination fails to recruit LC3 to SQSTM1-positive aggregates. In the host nucleus, deubiquitinates topoisomerase II subunits TOP2A and TOP2B thereby stabilizing SUMOylated TOP2 which halts the DNA damage response to TOP2-induced double strand DNA breaks and promotes cell survival. The protein is Large tegument protein deneddylase of Homo sapiens (Human).